A 94-amino-acid polypeptide reads, in one-letter code: MPRSIKKGPFVDDHLLKKVKEMNKSNKKQVIKTWSRRSTILPDMIGHTIAVHDGRKHVPVFITEDMVGHKLGEFAPTRTFRGHGDHTERSTSLK.

The protein belongs to the universal ribosomal protein uS19 family.

Functionally, protein S19 forms a complex with S13 that binds strongly to the 16S ribosomal RNA. The protein is Small ribosomal subunit protein uS19 of Natranaerobius thermophilus (strain ATCC BAA-1301 / DSM 18059 / JW/NM-WN-LF).